The primary structure comprises 399 residues: Accessory Sec system protein translocase subunit SecY2 (399 aa).

10 helical membrane-spanning segments follow: residues 14-34, 60-80, 102-122, 128-148, 152-172, 184-204, 238-258, 272-292, 335-355, and 362-382; these read ILFT…SIVG, LNVF…IMLL, IITI…YIHN, SNII…VWLA, ITYG…KSLF, VLLL…LLFI, ISIM…NLIA, FANP…SYLL, WTGA…TLLV, and IYFS…GETI.

Belongs to the SecY/SEC61-alpha family. SecY2 subfamily. As to quaternary structure, component of the accessory SecA2/SecY2 protein translocase complex required to export cell wall proteins. May form heterotrimers with SecE and SecG subunits.

It localises to the cell membrane. In terms of biological role, part of the accessory SecA2/SecY2 system specifically required for export of possible cell wall proteins. The central subunit of a protein translocation channel. This chain is Accessory Sec system protein translocase subunit SecY2, found in Staphylococcus haemolyticus (strain JCSC1435).